Here is a 358-residue protein sequence, read N- to C-terminus: Oligopeptide transport ATP-binding protein OppD (358 aa).

The ABC transporter domain maps to 8–259 (LEVKDLAISF…PRHPYTWGLL (252 aa)). Residue 44 to 51 (GESGSGKS) coordinates ATP.

This sequence belongs to the ABC transporter superfamily. As to quaternary structure, the complex is composed of two ATP-binding proteins (OppD and OppF), two transmembrane proteins (OppB and OppC) and a solute-binding protein (OppA).

The protein resides in the cell membrane. The catalysed reaction is a [peptide](out) + ATP + H2O = a [peptide](in) + ADP + phosphate + H(+). Its function is as follows. Part of the ABC transporter complex OppABCDF involved in the uptake of oligopeptides. Probably responsible for energy coupling to the transport system. Required for sporulation and genetic competence. The sequence is that of Oligopeptide transport ATP-binding protein OppD from Bacillus subtilis (strain 168).